We begin with the raw amino-acid sequence, 218 residues long: Pyrrolidone-carboxylate peptidase (218 aa).

Active-site residues include glutamate 81, cysteine 144, and histidine 169.

This sequence belongs to the peptidase C15 family. Homotetramer.

It localises to the cytoplasm. The enzyme catalyses Release of an N-terminal pyroglutamyl group from a polypeptide, the second amino acid generally not being Pro.. Its function is as follows. Removes 5-oxoproline from various penultimate amino acid residues except L-proline. This chain is Pyrrolidone-carboxylate peptidase (pcp), found in Deinococcus radiodurans (strain ATCC 13939 / DSM 20539 / JCM 16871 / CCUG 27074 / LMG 4051 / NBRC 15346 / NCIMB 9279 / VKM B-1422 / R1).